A 938-amino-acid polypeptide reads, in one-letter code: Protein translocase subunit SecA (938 aa).

ATP is bound by residues glutamine 90, 108–112 (GEGKT), and aspartate 504.

It belongs to the SecA family. In terms of assembly, monomer and homodimer. Part of the essential Sec protein translocation apparatus which comprises SecA, SecYEG and auxiliary proteins SecDF. Other proteins may also be involved.

The protein localises to the cell inner membrane. The protein resides in the cellular thylakoid membrane. It is found in the cytoplasm. The enzyme catalyses ATP + H2O + cellular proteinSide 1 = ADP + phosphate + cellular proteinSide 2.. Functionally, part of the Sec protein translocase complex. Interacts with the SecYEG preprotein conducting channel. Has a central role in coupling the hydrolysis of ATP to the transfer of proteins into and across the cell membrane, serving as an ATP-driven molecular motor driving the stepwise translocation of polypeptide chains across the membrane. Probably participates in protein translocation into and across both the cytoplasmic and thylakoid membranes in cyanobacterial cells. This chain is Protein translocase subunit SecA, found in Picosynechococcus sp. (strain ATCC 27264 / PCC 7002 / PR-6) (Agmenellum quadruplicatum).